The sequence spans 715 residues: Targeting protein for Xklp2-B (715 aa).

Residues 36 to 167 are disordered; that stretch reads NAENIPPDQK…LTMPATPTVL (132 aa). Over residues 47–56 the composition is skewed to polar residues; the sequence is LSETSVNAEQ. The segment covering 85 to 103 has biased composition (basic residues); sequence QTKRSARRMSKKHRQKILL. Residues 104 to 115 show a composition bias toward basic and acidic residues; sequence KMKETHLEKETA. The span at 141–152 shows a compositional bias: polar residues; the sequence is QPTSSHHGTTSP. The residue at position 204 (S204) is a Phosphoserine; by plk1. 2 disordered regions span residues 260-291 and 314-337; these read PPTSPVQVTKGGHTVPKPFNLSKGKRKHEEAS and RSRQKEMEGPSPVKMLKPKLTNPK.

It belongs to the TPX2 family. In terms of assembly, associates with microtubules. Interacts with aurka and plk1. Interacts with kif15. Phosphorylated during mitosis. Hyperphosphorylated upon assembly of microtubules.

It is found in the nucleus. The protein resides in the cytoplasm. Its subcellular location is the cytoskeleton. It localises to the spindle. The protein localises to the spindle pole. Its function is as follows. Spindle assembly factor. Required for normal assembly of mitotic spindles. Mediates the binding kif15 and aurka to spindle microtubules. Required for targeting kif15 to microtubule minus ends. Activates aurka by promoting its autophosphorylation and protects the phosphorylated residue against dephosphorylation. The polypeptide is Targeting protein for Xklp2-B (tpx2-b) (Xenopus laevis (African clawed frog)).